The sequence spans 379 residues: UDP-4-amino-4-deoxy-L-arabinose--oxoglutarate aminotransferase (379 aa).

Lysine 182 bears the N6-(pyridoxal phosphate)lysine mark.

The protein belongs to the DegT/DnrJ/EryC1 family. ArnB subfamily. In terms of assembly, homodimer. Requires pyridoxal 5'-phosphate as cofactor.

It carries out the reaction UDP-4-amino-4-deoxy-beta-L-arabinose + 2-oxoglutarate = UDP-beta-L-threo-pentopyranos-4-ulose + L-glutamate. Its pathway is nucleotide-sugar biosynthesis; UDP-4-deoxy-4-formamido-beta-L-arabinose biosynthesis; UDP-4-deoxy-4-formamido-beta-L-arabinose from UDP-alpha-D-glucuronate: step 2/3. The protein operates within bacterial outer membrane biogenesis; lipopolysaccharide biosynthesis. In terms of biological role, catalyzes the conversion of UDP-4-keto-arabinose (UDP-Ara4O) to UDP-4-amino-4-deoxy-L-arabinose (UDP-L-Ara4N). The modified arabinose is attached to lipid A and is required for resistance to polymyxin and cationic antimicrobial peptides. This is UDP-4-amino-4-deoxy-L-arabinose--oxoglutarate aminotransferase from Salmonella agona (strain SL483).